The sequence spans 357 residues: N-acetyl-gamma-glutamyl-phosphate reductase (357 aa).

Residue C160 is part of the active site.

The protein belongs to the NAGSA dehydrogenase family. Type 1 subfamily.

Its subcellular location is the cytoplasm. The catalysed reaction is N-acetyl-L-glutamate 5-semialdehyde + phosphate + NADP(+) = N-acetyl-L-glutamyl 5-phosphate + NADPH + H(+). It participates in amino-acid biosynthesis; L-arginine biosynthesis; N(2)-acetyl-L-ornithine from L-glutamate: step 3/4. Its function is as follows. Catalyzes the NADPH-dependent reduction of N-acetyl-5-glutamyl phosphate to yield N-acetyl-L-glutamate 5-semialdehyde. The protein is N-acetyl-gamma-glutamyl-phosphate reductase of Parasynechococcus marenigrum (strain WH8102).